Here is a 2768-residue protein sequence, read N- to C-terminus: Thyroglobulin (2768 aa).

Positions 1–19 are cleaved as a signal peptide; sequence MALVLEIFTLLASICWVSA. Iodotyrosine; alternate is present on tyrosine 24. At tyrosine 24 the chain carries Sulfotyrosine; alternate. Tyrosine 24 carries the post-translational modification Thyroxine; alternate. Triiodothyronine; alternate is present on tyrosine 24. 4 Thyroglobulin type-1 domains span residues 31-92, 93-160, 161-297, and 298-358; these read LRPC…PVAC, LSFC…PKRC, PRSC…RFRC, and PTKC…PPSC. Intrachain disulfides connect cysteine 34/cysteine 52, cysteine 63/cysteine 70, cysteine 72/cysteine 92, cysteine 96/cysteine 120, cysteine 131/cysteine 138, cysteine 140/cysteine 160, cysteine 164/cysteine 183, cysteine 194/cysteine 235, cysteine 237/cysteine 297, cysteine 301/cysteine 319, cysteine 330/cysteine 336, cysteine 338/cysteine 358, cysteine 364/cysteine 620, cysteine 408/cysteine 608, cysteine 631/cysteine 636, cysteine 638/cysteine 658, cysteine 662/cysteine 687, and cysteine 698/cysteine 703. A glycan (N-linked (GlcNAc...) asparagine) is linked at asparagine 76. Tyrosine 108 bears the Iodotyrosine mark. A glycan (N-linked (GlcNAc...) asparagine) is linked at asparagine 110. At tyrosine 149 the chain carries Iodotyrosine; alternate. Tyrosine 149 carries the post-translational modification Diiodotyrosine; alternate. Residue asparagine 198 is glycosylated (N-linked (GlcNAc...) asparagine). An iodotyrosine mark is found at tyrosine 234 and tyrosine 258. Asparagine 484 and asparagine 529 each carry an N-linked (GlcNAc...) asparagine glycan. The disordered stretch occupies residues 521–545; the sequence is PLSVGLDSNSSTGTPEAAKKDGTMN. 6 consecutive Thyroglobulin type-1 domains span residues 605-658, 659-726, 727-921, 922-1073, 1074-1145, and 1146-1210; these read SQTC…QPRC, PTDC…PKKC, PTPC…LPTC, PGSC…IPQC, PTTC…SAQC, and PSLC…QPAC. Tyrosine 704 is subject to Iodotyrosine; alternate. Tyrosine 704 carries the post-translational modification Thyroxine; alternate. Tyrosine 704 bears the Triiodothyronine; alternate mark. At tyrosine 704 the chain carries Diiodotyrosine; alternate. 16 disulfides stabilise this stretch: cysteine 705–cysteine 726, cysteine 730–cysteine 763, cysteine 774–cysteine 898, cysteine 900–cysteine 921, cysteine 925–cysteine 1031, cysteine 1042–cysteine 1049, cysteine 1051–cysteine 1073, cysteine 1077–cysteine 1108, cysteine 1126–cysteine 1145, cysteine 1149–cysteine 1169, cysteine 1181–cysteine 1188, cysteine 1190–cysteine 1210, cysteine 1215–cysteine 1264, cysteine 1231–cysteine 1245, cysteine 1306–cysteine 1356, and cysteine 1331–cysteine 1347. N-linked (GlcNAc...) asparagine glycosylation is present at asparagine 748. At tyrosine 785 the chain carries Iodotyrosine. Asparagine 816 carries an N-linked (GlcNAc...) asparagine glycan. Tyrosine 866 carries the iodotyrosine; alternate modification. Position 866 is a diiodotyrosine; alternate (tyrosine 866). Tyrosine 883 carries the diiodotyrosine modification. A glycan (N-linked (GlcNAc...) asparagine) is linked at asparagine 947. Tyrosine 992 bears the Iodotyrosine; alternate mark. Diiodotyrosine; alternate is present on tyrosine 992. A glycan (N-linked (GlcNAc...) asparagine) is linked at asparagine 1220. Tyrosine 1310 is subject to Iodotyrosine. Position 1310 is a thyroxine (tyrosine 1310). Asparagine 1348, asparagine 1349, and asparagine 1365 each carry an N-linked (GlcNAc...) asparagine glycan. 9 disulfide bridges follow: cysteine 1440/cysteine 1459, cysteine 1462/cysteine 1473, cysteine 1476/cysteine 1490, cysteine 1493/cysteine 1510, cysteine 1514/cysteine 1523, cysteine 1543/cysteine 1565, cysteine 1603/cysteine 1627, cysteine 1607/cysteine 1613, and cysteine 1639/cysteine 1662. Type II repeat units follow at residues 1456–1469, 1470–1486, and 1487–1503; these read GLGC…SYSQ, DEEC…EQAG, and SLAC…ISAG. Tyrosine 1467 carries the iodotyrosine; alternate modification. Tyrosine 1467 bears the Diiodotyrosine; alternate mark. The region spanning 1511–1565 is the Thyroglobulin type-1 11 domain; sequence VTDCQRNEAGLQCDQNGQYRASQKDRGSGKAFCVDGEGRRLPWWETEAPLEDSQC. Residues 1603-1723 form a Type IIIA repeat; it reads CLTDCTEDEA…GANLTDAHLF (121 aa). Asparagine 1716 carries an N-linked (GlcNAc...) asparagine glycan. Cystine bridges form between cysteine 1724-cysteine 1749, cysteine 1728-cysteine 1734, cysteine 1733-cysteine 1835, and cysteine 1760-cysteine 1777. A Type IIIB repeat occupies 1724–1892; sequence CLLACDRDLC…LFSAQQANLW (169 aa). Residues asparagine 1774 and asparagine 1869 are each glycosylated (N-linked (GlcNAc...) asparagine). Intrachain disulfides connect cysteine 1893-cysteine 1919, cysteine 1897-cysteine 1904, cysteine 1928-cysteine 1939, cysteine 1996-cysteine 2024, cysteine 2000-cysteine 2006, cysteine 2005-cysteine 2076, and cysteine 2035-cysteine 2048. Residues 1893-1995 form a Type IIIA repeat; it reads CLSRCVQEHS…EKSISNGFFE (103 aa). A Type IIIB repeat occupies 1996–2129; sequence CERRCDADPC…TSNFSAVRDL (134 aa). Asparagine 2013 is a glycosylation site (N-linked (GlcNAc...) asparagine). The N-linked (GlcNAc...) asparagine glycan is linked to asparagine 2122. Intrachain disulfides connect cysteine 2130–cysteine 2154, cysteine 2134–cysteine 2140, and cysteine 2163–cysteine 2172. A Type IIIA repeat occupies 2130–2187; that stretch reads CLSECSQHEACLITTLQTQPGAVRCMFYADTQSCTHSLQGQNCRLLLREEATHIYRKP. An Iodotyrosine modification is found at tyrosine 2184. Positions 2188–2768 are cholinesterase-like (ChEL); sequence GISLLSYEAS…QEPGSKTYSK (581 aa). Asparagine 2250 is a glycosylation site (N-linked (GlcNAc...) asparagine). Cysteine 2264 and cysteine 2281 are disulfide-bonded. Asparagine 2295 carries N-linked (GlcNAc...) asparagine glycosylation. A disulfide bond links cysteine 2442 and cysteine 2453. Residue tyrosine 2540 is modified to Iodotyrosine. Position 2573 is an iodotyrosine; alternate (tyrosine 2573). A Thyroxine; alternate modification is found at tyrosine 2573. Residue tyrosine 2573 is modified to Triiodothyronine; alternate. Tyrosine 2573 is modified (diiodotyrosine; alternate). The N-linked (GlcNAc...) asparagine glycan is linked to asparagine 2582. Tyrosine 2587 and tyrosine 2617 each carry iodotyrosine. Cysteine 2591 and cysteine 2715 are oxidised to a cystine. Tyrosine 2697 bears the Diiodotyrosine mark. The segment at 2727–2768 is disordered; that stretch reads TSADGAKGGQSAESEEEELTAGSGLREDLLSLQEPGSKTYSK. Residue serine 2749 is glycosylated (O-linked (Xyl...) (chondroitin sulfate) serine). Tyrosine 2766 is subject to Iodotyrosine; alternate. Tyrosine 2766 carries the post-translational modification Thyroxine; alternate. Position 2766 is a triiodothyronine; alternate (tyrosine 2766). The residue at position 2766 (tyrosine 2766) is a Diiodotyrosine; alternate.

The protein belongs to the type-B carboxylesterase/lipase family. Monomer. Homodimer (via ChEL region); occurs in the endoplasmic reticulum and is required for export to the Golgi apparatus. Homooligomer; disulfide-linked; stored in this form in the thyroid follicle lumen. In terms of processing, iodinated on tyrosine residues by TPO. There are 4 pairs of iodinated tyrosines used for coupling: acceptor Tyr-24 is coupled to donor Tyr-149 or Tyr-234, acceptor Tyr-2573 is coupled to donor Tyr-2540, acceptor Tyr-2766 in monomer 1 is coupled to donor Tyr-2766 in monomer 2 and acceptor Tyr-1310 in monomer 1 is coupled to donor Tyr-108 in monomer 2. Sulfated tyrosines are desulfated during iodination. Post-translationally, undergoes sequential proteolysis by cathepsins to release thyroxine (T4) and triiodothyronine (T3) hormones. In the thyroid follicle lumen, cross-linked TG (storage form) is solubilized by limited proteolysis mediated by cathepsins CTSB and/or CTSL. Partially cleaved TG is further processed by CTSK/cathepsin K and/or CTSL resulting in the release of T4. Following endocytosis, further processing occurs leading to the release of T3 and more T4 hormones. Specifically expressed in the thyroid gland.

The protein resides in the secreted. Acts as a substrate for the production of iodinated thyroid hormones thyroxine (T4) and triiodothyronine (T3). The synthesis of T3 and T4 involves iodination of selected tyrosine residues of TG/thyroglobulin followed by their oxidative coupling in the thyroid follicle lumen. Following TG re-internalization and lysosomal-mediated proteolysis, T3 and T4 are released from the polypeptide backbone leading to their secretion into the bloodstream. One dimer produces 7 thyroid hormone molecules. The protein is Thyroglobulin of Homo sapiens (Human).